Reading from the N-terminus, the 82-residue chain is RNA-binding protein Hfq (82 aa).

Residues 11–71 (DTFLNHVRKT…ISTIMPGAPI (61 aa)) form the Sm domain.

It belongs to the Hfq family. In terms of assembly, homohexamer.

Functionally, RNA chaperone that binds small regulatory RNA (sRNAs) and mRNAs to facilitate mRNA translational regulation in response to envelope stress, environmental stress and changes in metabolite concentrations. Also binds with high specificity to tRNAs. The protein is RNA-binding protein Hfq of Rhodopseudomonas palustris (strain BisA53).